The sequence spans 267 residues: Protein BMH1 (267 aa).

N-acetylserine is present on Ser-2. Residue Lys-76 forms a Glycyl lysine isopeptide (Lys-Gly) (interchain with G-Cter in ubiquitin) linkage. At Ser-89 the chain carries Phosphoserine. The interval Asp-236–Lys-267 is disordered. Low complexity predominate over residues Ala-243–Lys-267.

It belongs to the 14-3-3 family. As to quaternary structure, homodimer. Interacts with NTH1 (via N-terminus when phosphorylated by PKA); the interaction is direct and activates NTH1. Interacts with FIN1.

Involved in growth regulation. The polypeptide is Protein BMH1 (BMH1) (Saccharomyces cerevisiae (strain ATCC 204508 / S288c) (Baker's yeast)).